The primary structure comprises 493 residues: Ectonucleoside triphosphate diphosphohydrolase 8 (493 aa).

At 1–7 (MEYKGKV) the chain is on the cytoplasmic side. A helical membrane pass occupies residues 8-28 (VAGLLTATCVFSIIALILSAV). At 29 to 463 (DVKDVFLPPG…ALEHVKGHEP (435 aa)) the chain is on the extracellular side. N-linked (GlcNAc...) asparagine glycans are attached at residues N65, N79, and N133. A disulfide bridge links C76 with C100. E166 (proton acceptor) is an active-site residue. Residues N223, N234, N267, N324, N330, N361, N372, N382, and N445 are each glycosylated (N-linked (GlcNAc...) asparagine). Residues C244 and C291 are joined by a disulfide bond. C327 and C333 are oxidised to a cystine. Residues C379 and C401 are joined by a disulfide bond. The chain crosses the membrane as a helical span at residues 464-486 (SLWAGAISFIVLAIVAGLVAILL). The Cytoplasmic segment spans residues 487–493 (QCFWKSK).

The protein belongs to the GDA1/CD39 NTPase family. The cofactor is Ca(2+). Requires Mg(2+) as cofactor. Post-translationally, N-glycosylated.

It localises to the cell membrane. The enzyme catalyses a ribonucleoside 5'-triphosphate + 2 H2O = a ribonucleoside 5'-phosphate + 2 phosphate + 2 H(+). Canalicular ectonucleoside NTPDase responsible for the main hepatic NTPDase activity. Ectonucleoside ATPases catalyze the hydrolysis of gamma- and beta-phosphate residues of nucleotides, playing a central role in concentration of extracellular nucleotides. The sequence is that of Ectonucleoside triphosphate diphosphohydrolase 8 (ENTPD8) from Gallus gallus (Chicken).